The sequence spans 530 residues: tRNA-2-methylthio-N(6)-dimethylallyladenosine synthase (530 aa).

An MTTase N-terminal domain is found at 19–134 (RTYEVRTYGC…LPTLLERARH (116 aa)). Positions 28, 63, 97, 171, 175, and 178 each coordinate [4Fe-4S] cluster. The 231-residue stretch at 157-387 (RDEIASGWVS…TALQERISHE (231 aa)) folds into the Radical SAM core domain. Residues 390 to 460 (QRVVGRTVEV…PFHLIADSVD (71 aa)) form the TRAM domain. The disordered stretch occupies residues 509–530 (VPTTASTSAPVGDGSAHPRHRA).

This sequence belongs to the methylthiotransferase family. MiaB subfamily. In terms of assembly, monomer. [4Fe-4S] cluster is required as a cofactor.

It is found in the cytoplasm. It carries out the reaction N(6)-dimethylallyladenosine(37) in tRNA + (sulfur carrier)-SH + AH2 + 2 S-adenosyl-L-methionine = 2-methylsulfanyl-N(6)-dimethylallyladenosine(37) in tRNA + (sulfur carrier)-H + 5'-deoxyadenosine + L-methionine + A + S-adenosyl-L-homocysteine + 2 H(+). Its function is as follows. Catalyzes the methylthiolation of N6-(dimethylallyl)adenosine (i(6)A), leading to the formation of 2-methylthio-N6-(dimethylallyl)adenosine (ms(2)i(6)A) at position 37 in tRNAs that read codons beginning with uridine. The protein is tRNA-2-methylthio-N(6)-dimethylallyladenosine synthase of Clavibacter sepedonicus (Clavibacter michiganensis subsp. sepedonicus).